The primary structure comprises 293 residues: Nucleotide-binding protein BcerKBAB4_4948 (293 aa).

14–21 contributes to the ATP binding site; sequence GMSGAGKT. A GTP-binding site is contributed by 65–68; sequence DLRG.

The protein belongs to the RapZ-like family.

Displays ATPase and GTPase activities. The protein is Nucleotide-binding protein BcerKBAB4_4948 of Bacillus mycoides (strain KBAB4) (Bacillus weihenstephanensis).